Reading from the N-terminus, the 547-residue chain is Sodium-coupled neutral amino acid transporter 4 (547 aa).

The tract at residues 1 to 30 is disordered; the sequence is MDPMELRNVNIEPDDESSSGESAPDSYIGI. Residues 1-104 lie on the Extracellular side of the membrane; sequence MDPMELRNVN…GLSYAMANTG (104 aa). S49 carries the post-translational modification Phosphoserine. A helical transmembrane segment spans residues 105–125; sequence IILFIIMLLAVAILSLYSVHL. The Cytoplasmic segment spans residues 126–151; sequence LLKTAKEGGSLIYEKLGEKAFGWPGK. Residues 152–172 form a helical membrane-spanning segment; sequence IGAFVSITMQNIGAMSSYLFI. Over 173–195 the chain is Extracellular; the sequence is IKYELPEVIRAFMGLEENTGEWY. Residues 196-216 traverse the membrane as a helical segment; it reads LNGNYLIIFVSVGIILPLSLL. Topologically, residues 217-220 are cytoplasmic; the sequence is KNLG. Residues 221 to 241 form a helical membrane-spanning segment; it reads YLGYTSGFSLTCMVFFVSVVI. Residues 242–332 lie on the Extracellular side of the membrane; that stretch reads YKKFQIPCPL…PKYFVFNSRT (91 aa). C249 and C321 are joined by a disulfide. N-linked (GlcNAc...) asparagine glycosylation is found at N260, N264, and N276. A helical transmembrane segment spans residues 333 to 353; that stretch reads AYAIPILVFAFVCHPEVLPIY. The Cytoplasmic portion of the chain corresponds to 354–369; that stretch reads SELKDRSRRKMQTVSN. Residues 370-390 traverse the membrane as a helical segment; the sequence is ISITGMLVMYLLAALFGYLTF. At 391–411 the chain is on the extracellular side; it reads YGEVEDELLHAYSKVYTLDIP. A helical membrane pass occupies residues 412-432; the sequence is LLMVRLAVLVAVTLTVPIVLF. Residues 433 to 453 are Cytoplasmic-facing; that stretch reads PIRTSVITLLFPKRPFSWIRH. Residues 454-474 form a helical membrane-spanning segment; the sequence is FLIAAVLIALNNVLVILVPTI. The Extracellular segment spans residues 475-476; it reads KY. A helical membrane pass occupies residues 477–497; the sequence is IFGFIGASSATMLIFILPAVF. The Cytoplasmic portion of the chain corresponds to 498–514; that stretch reads YLKLVKKETFRSPQKVG. Residues 515–535 form a helical membrane-spanning segment; that stretch reads ALIFLVVGIFFMIGSMALIII. The Extracellular segment spans residues 536–547; it reads DWIYDPPNSKHH.

It belongs to the amino acid/polyamine transporter 2 family. The disulfide bond plays an important role in substrate transport, but has no effect on trafficking to the cell surface. Expressed almost exclusively in embryonic and adult liver, and at lower levels in the kidney. Expressed at lower levels in adult muscle and pancreas. Detected in fetal blood vessels. Expressed in syncytiotrophoblas of placenta during first trimester and at term. Highly expressed in first trimester placenta compared to term placenta.

Its subcellular location is the cell membrane. The protein resides in the cell projection. The protein localises to the microvillus membrane. The enzyme catalyses L-methionine(in) + Na(+)(in) = L-methionine(out) + Na(+)(out). The catalysed reaction is L-asparagine(in) + Na(+)(in) = L-asparagine(out) + Na(+)(out). It catalyses the reaction L-threonine(in) + Na(+)(in) = L-threonine(out) + Na(+)(out). It carries out the reaction L-serine(in) + Na(+)(in) = L-serine(out) + Na(+)(out). The enzyme catalyses glycine(in) + Na(+)(in) = glycine(out) + Na(+)(out). The catalysed reaction is L-alanine(in) + Na(+)(in) = L-alanine(out) + Na(+)(out). It catalyses the reaction L-glutamine(in) + Na(+)(in) = L-glutamine(out) + Na(+)(out). It carries out the reaction L-histidine(in) + Na(+)(in) = L-histidine(out) + Na(+)(out). The enzyme catalyses L-cysteine(in) + Na(+)(in) = L-cysteine(out) + Na(+)(out). The catalysed reaction is L-proline(in) + Na(+)(in) = L-proline(out) + Na(+)(out). In terms of biological role, symporter that cotransports neutral amino acids and sodium ions from the extraccellular to the intracellular side of the cell membrane. The transport is electrogenic, pH dependent and partially tolerates substitution of Na(+) by Li(+). Preferentially transports smaller amino acids, such as glycine, L-alanine, L-serine, L-asparagine and L-threonine, followed by L-cysteine, L-histidine, L-proline and L-glutamine and L-methionine. In Homo sapiens (Human), this protein is Sodium-coupled neutral amino acid transporter 4.